A 232-amino-acid polypeptide reads, in one-letter code: Putative N-acetylmannosamine-6-phosphate 2-epimerase (232 aa).

This sequence belongs to the NanE family.

It carries out the reaction an N-acyl-D-glucosamine 6-phosphate = an N-acyl-D-mannosamine 6-phosphate. The protein operates within amino-sugar metabolism; N-acetylneuraminate degradation; D-fructose 6-phosphate from N-acetylneuraminate: step 3/5. In terms of biological role, converts N-acetylmannosamine-6-phosphate (ManNAc-6-P) to N-acetylglucosamine-6-phosphate (GlcNAc-6-P). This Corynebacterium glutamicum (strain R) protein is Putative N-acetylmannosamine-6-phosphate 2-epimerase.